The chain runs to 366 residues: Aminomethyltransferase (366 aa).

It belongs to the GcvT family. As to quaternary structure, the glycine cleavage system is composed of four proteins: P, T, L and H.

The catalysed reaction is N(6)-[(R)-S(8)-aminomethyldihydrolipoyl]-L-lysyl-[protein] + (6S)-5,6,7,8-tetrahydrofolate = N(6)-[(R)-dihydrolipoyl]-L-lysyl-[protein] + (6R)-5,10-methylene-5,6,7,8-tetrahydrofolate + NH4(+). Its function is as follows. The glycine cleavage system catalyzes the degradation of glycine. This Bacillus cytotoxicus (strain DSM 22905 / CIP 110041 / 391-98 / NVH 391-98) protein is Aminomethyltransferase.